The chain runs to 407 residues: Carbamoyl phosphate synthase small chain (407 aa).

The tract at residues 1-205 (MTETTPKTAP…LQDGYGEQDA (205 aa)) is CPSase. L-glutamine-binding residues include serine 60, glycine 257, and glycine 259. The region spanning 209 to 397 (HVVALDFGVK…INLIRERKGQ (189 aa)) is the Glutamine amidotransferase type-1 domain. The Nucleophile role is filled by cysteine 286. L-glutamine-binding residues include leucine 287, glutamine 290, asparagine 328, glycine 330, and phenylalanine 331. Catalysis depends on residues histidine 370 and glutamate 372.

This sequence belongs to the CarA family. In terms of assembly, composed of two chains; the small (or glutamine) chain promotes the hydrolysis of glutamine to ammonia, which is used by the large (or ammonia) chain to synthesize carbamoyl phosphate. Tetramer of heterodimers (alpha,beta)4.

It carries out the reaction hydrogencarbonate + L-glutamine + 2 ATP + H2O = carbamoyl phosphate + L-glutamate + 2 ADP + phosphate + 2 H(+). The enzyme catalyses L-glutamine + H2O = L-glutamate + NH4(+). It functions in the pathway amino-acid biosynthesis; L-arginine biosynthesis; carbamoyl phosphate from bicarbonate: step 1/1. The protein operates within pyrimidine metabolism; UMP biosynthesis via de novo pathway; (S)-dihydroorotate from bicarbonate: step 1/3. Its function is as follows. Small subunit of the glutamine-dependent carbamoyl phosphate synthetase (CPSase). CPSase catalyzes the formation of carbamoyl phosphate from the ammonia moiety of glutamine, carbonate, and phosphate donated by ATP, constituting the first step of 2 biosynthetic pathways, one leading to arginine and/or urea and the other to pyrimidine nucleotides. The small subunit (glutamine amidotransferase) binds and cleaves glutamine to supply the large subunit with the substrate ammonia. This Brucella canis (strain ATCC 23365 / NCTC 10854 / RM-666) protein is Carbamoyl phosphate synthase small chain.